Consider the following 248-residue polypeptide: 1-(5-phosphoribosyl)-5-[(5-phosphoribosylamino)methylideneamino] imidazole-4-carboxamide isomerase (248 aa).

D8 acts as the Proton acceptor in catalysis. Residue D129 is the Proton donor of the active site.

Belongs to the HisA/HisF family.

Its subcellular location is the cytoplasm. It catalyses the reaction 1-(5-phospho-beta-D-ribosyl)-5-[(5-phospho-beta-D-ribosylamino)methylideneamino]imidazole-4-carboxamide = 5-[(5-phospho-1-deoxy-D-ribulos-1-ylimino)methylamino]-1-(5-phospho-beta-D-ribosyl)imidazole-4-carboxamide. It participates in amino-acid biosynthesis; L-histidine biosynthesis; L-histidine from 5-phospho-alpha-D-ribose 1-diphosphate: step 4/9. In Sinorhizobium medicae (strain WSM419) (Ensifer medicae), this protein is 1-(5-phosphoribosyl)-5-[(5-phosphoribosylamino)methylideneamino] imidazole-4-carboxamide isomerase.